The primary structure comprises 883 residues: Leucine--tRNA ligase (883 aa).

The 'HIGH' region motif lies at 43–53 (PYPSGRIHIGH). The 'KMSKS' region motif lies at 630-634 (KMSKS). Residue Lys-633 participates in ATP binding.

The protein belongs to the class-I aminoacyl-tRNA synthetase family.

The protein localises to the cytoplasm. The enzyme catalyses tRNA(Leu) + L-leucine + ATP = L-leucyl-tRNA(Leu) + AMP + diphosphate. In Nitrobacter winogradskyi (strain ATCC 25391 / DSM 10237 / CIP 104748 / NCIMB 11846 / Nb-255), this protein is Leucine--tRNA ligase.